Reading from the N-terminus, the 1676-residue chain is Anucleate primary sterigmata protein A (1676 aa).

A compositionally biased stretch (polar residues) spans 1–11; that stretch reads MEDSQRGNASM. Residues 1 to 35 are disordered; it reads MEDSQRGNASMMSMMDDPFVVSPEGARDPPSTNQY. A coiled-coil region spans residues 51–127; that stretch reads AQAKRALEAH…EIGQETARAF (77 aa). Disordered regions lie at residues 160 to 180, 353 to 394, 439 to 712, 1027 to 1050, 1176 to 1201, 1220 to 1270, and 1297 to 1354; these read QATN…NQSN, RLRQ…TPRH, DEVE…SRRP, GTST…PVEP, PLGA…DQGA, VRPL…QASS, and PASA…RRSS. Residues 163 to 172 are compositionally biased toward low complexity; sequence NSPSKVSVPS. 2 coiled-coil regions span residues 193–359 and 408–453; these read TSLL…QQEA and HAHR…AANG. Basic and acidic residues-rich tracts occupy residues 355 to 370, 439 to 448, 461 to 470, 479 to 489, and 503 to 522; these read RQQE…RPHD, DEVEQRRRDS, TKAETRKPAR, KKAEVEIHDSD, and ASND…RSDA. The segment covering 593–602 has biased composition (low complexity); it reads SYYSTASTSA. The segment covering 609-620 has biased composition (polar residues); that stretch reads DPGTPSISQFST. Positions 623–636 are enriched in basic residues; that stretch reads YRLRKKRSVLRKIR. Over residues 647–664 the composition is skewed to polar residues; the sequence is SRPSSARESPSTSFTRDT. The segment covering 678 to 687 has biased composition (acidic residues); sequence AEVDGDEDDF. Over residues 1032-1042 the composition is skewed to low complexity; it reads TVEFSVSSISS. The span at 1191–1201 shows a compositional bias: polar residues; the sequence is SGSSNQADQGA. The span at 1314 to 1341 shows a compositional bias: polar residues; sequence RASSQQRPRTPNESALQVGSAKTTTSRA. The region spanning 1393-1504 is the PH domain; sequence QTMIGEFLWK…WFNALSYLLV (112 aa). Residues 1511-1524 show a composition bias toward acidic residues; that stretch reads EEAENGVTLDDIDE. Disordered stretches follow at residues 1511 to 1589 and 1654 to 1676; these read EEAE…QASS and HDVS…HSHH. Composition is skewed to polar residues over residues 1534–1548 and 1580–1589; these read RQTA…QSRG and YSDQARQASS.

It is found in the membrane. Required for nuclear positioning and completion of asexual development. The protein is Anucleate primary sterigmata protein A (apsA) of Emericella nidulans (strain FGSC A4 / ATCC 38163 / CBS 112.46 / NRRL 194 / M139) (Aspergillus nidulans).